The following is a 573-amino-acid chain: Proline--tRNA ligase (573 aa).

The protein belongs to the class-II aminoacyl-tRNA synthetase family. ProS type 1 subfamily. As to quaternary structure, homodimer.

It is found in the cytoplasm. The catalysed reaction is tRNA(Pro) + L-proline + ATP = L-prolyl-tRNA(Pro) + AMP + diphosphate. Functionally, catalyzes the attachment of proline to tRNA(Pro) in a two-step reaction: proline is first activated by ATP to form Pro-AMP and then transferred to the acceptor end of tRNA(Pro). As ProRS can inadvertently accommodate and process non-cognate amino acids such as alanine and cysteine, to avoid such errors it has two additional distinct editing activities against alanine. One activity is designated as 'pretransfer' editing and involves the tRNA(Pro)-independent hydrolysis of activated Ala-AMP. The other activity is designated 'posttransfer' editing and involves deacylation of mischarged Ala-tRNA(Pro). The misacylated Cys-tRNA(Pro) is not edited by ProRS. This Chromohalobacter salexigens (strain ATCC BAA-138 / DSM 3043 / CIP 106854 / NCIMB 13768 / 1H11) protein is Proline--tRNA ligase.